The following is a 59-amino-acid chain: Large ribosomal subunit protein uL30 (59 aa).

It belongs to the universal ribosomal protein uL30 family. As to quaternary structure, part of the 50S ribosomal subunit.

The protein is Large ribosomal subunit protein uL30 of Herminiimonas arsenicoxydans.